The chain runs to 284 residues: D-tagatose-1,6-bisphosphate aldolase subunit GatY (284 aa).

The active-site Proton donor is aspartate 82. 2 residues coordinate Zn(2+): histidine 83 and histidine 180. Glycine 181 is a dihydroxyacetone phosphate binding site. Residue histidine 208 participates in Zn(2+) binding. Residues 209-211 (GAS) and 230-233 (NVAT) each bind dihydroxyacetone phosphate.

Belongs to the class II fructose-bisphosphate aldolase family. TagBP aldolase GatY subfamily. In terms of assembly, forms a complex with GatZ. It depends on Zn(2+) as a cofactor.

It catalyses the reaction D-tagatofuranose 1,6-bisphosphate = D-glyceraldehyde 3-phosphate + dihydroxyacetone phosphate. Its pathway is carbohydrate metabolism; D-tagatose 6-phosphate degradation; D-glyceraldehyde 3-phosphate and glycerone phosphate from D-tagatose 6-phosphate: step 2/2. In terms of biological role, catalytic subunit of the tagatose-1,6-bisphosphate aldolase GatYZ, which catalyzes the reversible aldol condensation of dihydroxyacetone phosphate (DHAP or glycerone-phosphate) with glyceraldehyde 3-phosphate (G3P) to produce tagatose 1,6-bisphosphate (TBP). Requires GatZ subunit for full activity and stability. Is involved in the catabolism of galactitol. This is D-tagatose-1,6-bisphosphate aldolase subunit GatY from Escherichia coli O8 (strain IAI1).